An 86-amino-acid polypeptide reads, in one-letter code: uncharacterized protein (86 aa).

The next 3 helical transmembrane spans lie at 4–24, 34–54, and 64–84; these read ILIIAEYTLLASLAVFSIAAV, MGLVGISGLNIAIATILILIN, and DIAYALVLLGPVGTIAFARVL.

The protein to M.jannaschii MJ1223.

The protein resides in the cell membrane. This is an uncharacterized protein from Methanothermobacter thermautotrophicus (strain ATCC 29096 / DSM 1053 / JCM 10044 / NBRC 100330 / Delta H) (Methanobacterium thermoautotrophicum).